A 463-amino-acid chain; its full sequence is Cytidylate cyclase (463 aa).

The Guanylate cyclase domain occupies 122 to 231 (VTMFMDIIGS…IGIRIGIDLG (110 aa)). Residue phenylalanine 125 participates in a ribonucleoside 5'-triphosphate binding. Mn(2+) is bound by residues aspartate 127, isoleucine 128, and aspartate 171. An AGS-C domain region spans residues 334 to 454 (KPSRIKVVIS…VISNDTVIER (121 aa)).

This sequence belongs to the adenylyl cyclase class-4/guanylyl cyclase family. Pyrimidine cyclase subfamily. In terms of assembly, homodimer. It depends on Mn(2+) as a cofactor.

Its subcellular location is the cytoplasm. It carries out the reaction CTP = 3',5'-cyclic CMP + diphosphate. Functionally, pycsar (pyrimidine cyclase system for antiphage resistance) provides immunity against bacteriophage. The pyrimidine cyclase (PycC) synthesizes cyclic nucleotides in response to infection; these serve as specific second messenger signals. The signal activates the adjacent effector, leading to bacterial cell death and abortive phage infection. A clade E Pycsar system. Its function is as follows. The pyrimidine cyclase gene of a two-gene Pycsar system, generates cyclic CMP (cCMP) from CTP in response to bacteriophage infection. Has little to no activity on ATP, GTP or UTP. Expression of this and adjacent effector Ec303145PycTM (AC P0DV27) confers resistance to bacteriophage P1, T5, lambda-vir and phi27. The protein is Cytidylate cyclase of Escherichia coli.